A 390-amino-acid polypeptide reads, in one-letter code: Nicotinate phosphoribosyltransferase (390 aa).

The residue at position 211 (His211) is a Phosphohistidine; by autocatalysis.

This sequence belongs to the NAPRTase family. Post-translationally, transiently phosphorylated on a His residue during the reaction cycle. Phosphorylation strongly increases the affinity for substrates and increases the rate of nicotinate D-ribonucleotide production. Dephosphorylation regenerates the low-affinity form of the enzyme, leading to product release.

It carries out the reaction nicotinate + 5-phospho-alpha-D-ribose 1-diphosphate + ATP + H2O = nicotinate beta-D-ribonucleotide + ADP + phosphate + diphosphate. It participates in cofactor biosynthesis; NAD(+) biosynthesis; nicotinate D-ribonucleotide from nicotinate: step 1/1. Its function is as follows. Catalyzes the synthesis of beta-nicotinate D-ribonucleotide from nicotinate and 5-phospho-D-ribose 1-phosphate at the expense of ATP. This is Nicotinate phosphoribosyltransferase from Chromohalobacter salexigens (strain ATCC BAA-138 / DSM 3043 / CIP 106854 / NCIMB 13768 / 1H11).